We begin with the raw amino-acid sequence, 831 residues long: Probable basic-leucine zipper transcription factor P (831 aa).

2 disordered regions span residues 1 to 33 and 54 to 166; these read MNHR…PSII and NITS…IASR. The span at 54 to 85 shows a compositional bias: low complexity; sequence NITSSPSTSSSPPISTTTTTTTTTTTTATAKK. Residues 87-96 are compositionally biased toward basic and acidic residues; that stretch reads NSKEKKKTTN. Low complexity predominate over residues 97–129; that stretch reads KDNNNNNNNNNSNNQQQQQQQQQQQQQQQQQQQ. A coiled-coil region spans residues 101–141; sequence NNNNNNNSNNQQQQQQQQQQQQQQQQQQQYEEEDDDEEDEG. Positions 130–143 are enriched in acidic residues; it reads YEEEDDDEEDEGGD. Residues 144-154 show a composition bias toward basic and acidic residues; the sequence is DNTKVGKGEKM. Positions 151-214 constitute a bZIP domain; it reads GEKMKARRTN…LELLKFSQEV (64 aa). The tract at residues 153-173 is basic motif; it reads KMKARRTNQNIASRNYRQRKK. Residues 176 to 183 are leucine-zipper; that stretch reads IKEMEDKI. Low complexity-rich tracts occupy residues 469–484 and 497–510; these read SSSS…SSTS and SSSN…SASS. 4 disordered regions span residues 469 to 510, 658 to 697, 715 to 771, and 787 to 810; these read SSSS…SASS, QQQA…HQNY, DATN…NTNK, and SLFS…QNDS. Residues 601-664 adopt a coiled-coil conformation; that stretch reads AQQHAQQQAQ…QAAQQQAAQQ (64 aa). Composition is skewed to low complexity over residues 674–695, 720–750, and 787–800; these read PPQH…QQHQ, NNNN…NNNN, and SLFS…NSQS.

It belongs to the bZIP family.

Its subcellular location is the nucleus. Its function is as follows. Probable transcriptional regulator. The sequence is that of Probable basic-leucine zipper transcription factor P (bzpP) from Dictyostelium discoideum (Social amoeba).